A 203-amino-acid chain; its full sequence is MASNTLIESTSVRRSPAEHLAEAMAQGSTAGTVQLREIAFATQVGVRAVPGSGGFAALAEAVGTGLPQQVGVVAGSVEGTAVLWLGPDEFLAIAPEGAELAAELVAALGDEPGQVLDLSANRSVLELSGPAAPLVLRKSCPADLHPRAFGVNLAITTTLANIPVLLWRTGEQSWYILPRASFTEHTVHWLIDAMSEFASEPVA.

The protein belongs to the SoxG family. As to quaternary structure, heterotetramer composed of subunits alpha (SoxA), beta (SoxB), gamma (SoxG) and delta (SoxD).

The protein localises to the cytoplasm. It carries out the reaction sarcosine + (6S)-5,6,7,8-tetrahydrofolate + O2 = (6R)-5,10-methylene-5,6,7,8-tetrahydrofolate + glycine + H2O2. The enzyme catalyses sarcosine + O2 + H2O = formaldehyde + glycine + H2O2. In terms of biological role, in the presence of tetrahydrofolate, catalyzes the oxidative demethylation of sarcosine to yield glycine, 5,10-methylenetetrahydrofolate and hydrogen peroxide. In the absence of tetrahydrofolate, catalyzes the oxidative demethylation of sarcosine to yield glycine, formaldehyde and hydrogen peroxide. In Corynebacterium sp. (strain P-1), this protein is Sarcosine oxidase subunit gamma.